A 621-amino-acid polypeptide reads, in one-letter code: Interleukin-1 receptor-associated kinase-like 2 (621 aa).

In terms of domain architecture, Death spans 13 to 94; that stretch reads LDDLCRNMDT…RAAQIILNWK (82 aa). Positions 113–175 are disordered; the sequence is GKPLAASVRN…TASADSKDFS (63 aa). Positions 157–169 are enriched in polar residues; that stretch reads ASSSLKTNQTASA. In terms of domain architecture, Protein kinase spans 206–476; the sequence is FNPSHKISEG…AEALVMAACL (271 aa). Residues 212–220, K233, and 333–336 each bind ATP; these read ISEGTFADV and KSSN. A compositionally biased stretch (polar residues) spans 503 to 522; it reads ETSLPCSGLSEGTGSSFNTP. Residues 503–534 form a disordered region; the sequence is ETSLPCSGLSEGTGSSFNTPEETDDVDNSSFD.

It belongs to the protein kinase superfamily. TKL Ser/Thr protein kinase family. Pelle subfamily. As to quaternary structure, interacts with MYD88. IL-1 stimulation leads to the formation of a signaling complex which dissociates from the IL-1 receptor following the binding of PELI1.

Its function is as follows. Binds to the IL-1 type I receptor following IL-1 engagement, triggering intracellular signaling cascades leading to transcriptional up-regulation and mRNA stabilization. The polypeptide is Interleukin-1 receptor-associated kinase-like 2 (IRAK2) (Bos taurus (Bovine)).